A 313-amino-acid polypeptide reads, in one-letter code: MTNKVYLLTDEQSKKIEHVLPTSDTTNLPQGTKYRTKISGHTVTLYNSNKLMIQGADSEVIGEQILSKAGIQLTQQLPDSNSTSKHNVSIESIQYDNYNCIGSDEAGSGDYFGPMTVVASYVSKKNAEILKVLGVMDSKNLKDRQIIELAEQIIPIIPHSLLVLDNIKYNERKQMGWSQVKMKAVLHNEAIKNVLNKIEEPVDYIVIDQFAVQGVYENYALGAIPERNKTKFETKGESKAIAIAASSIIARYAFVKHFEQIIKETGISITKGAGAKVDVEAAKIIKLRGIDYLDTITKKDFKNREKALKLIKK.

The RNase H type-2 domain occupies 98 to 313; sequence YNCIGSDEAG…REKALKLIKK (216 aa). Positions 104, 105, and 208 each coordinate a divalent metal cation.

It belongs to the RNase HII family. RnhC subfamily. The cofactor is Mn(2+). It depends on Mg(2+) as a cofactor.

The protein resides in the cytoplasm. It catalyses the reaction Endonucleolytic cleavage to 5'-phosphomonoester.. Endonuclease that specifically degrades the RNA of RNA-DNA hybrids. The chain is Ribonuclease HIII from Macrococcus caseolyticus (strain JCSC5402) (Macrococcoides caseolyticum).